Consider the following 169-residue polypeptide: Crossover junction endodeoxyribonuclease RuvC (169 aa).

Active-site residues include Asp12, Glu72, and Asp144. Mg(2+)-binding residues include Asp12, Glu72, and Asp144.

Belongs to the RuvC family. Homodimer which binds Holliday junction (HJ) DNA. The HJ becomes 2-fold symmetrical on binding to RuvC with unstacked arms; it has a different conformation from HJ DNA in complex with RuvA. In the full resolvosome a probable DNA-RuvA(4)-RuvB(12)-RuvC(2) complex forms which resolves the HJ. Mg(2+) serves as cofactor.

Its subcellular location is the cytoplasm. It carries out the reaction Endonucleolytic cleavage at a junction such as a reciprocal single-stranded crossover between two homologous DNA duplexes (Holliday junction).. Its function is as follows. The RuvA-RuvB-RuvC complex processes Holliday junction (HJ) DNA during genetic recombination and DNA repair. Endonuclease that resolves HJ intermediates. Cleaves cruciform DNA by making single-stranded nicks across the HJ at symmetrical positions within the homologous arms, yielding a 5'-phosphate and a 3'-hydroxyl group; requires a central core of homology in the junction. The consensus cleavage sequence is 5'-(A/T)TT(C/G)-3'. Cleavage occurs on the 3'-side of the TT dinucleotide at the point of strand exchange. HJ branch migration catalyzed by RuvA-RuvB allows RuvC to scan DNA until it finds its consensus sequence, where it cleaves and resolves the cruciform DNA. In Xanthobacter autotrophicus (strain ATCC BAA-1158 / Py2), this protein is Crossover junction endodeoxyribonuclease RuvC.